A 270-amino-acid polypeptide reads, in one-letter code: Co-chaperone protein DjlA (270 aa).

The Periplasmic portion of the chain corresponds to 1 to 6 (MQYWGK). A helical transmembrane segment spans residues 7 to 31 (IIGVAVALMMGGGFWGVVLGLLVGH). Residues 32–270 (MFDKARSRKM…ELIKEQKGFK (239 aa)) lie on the Cytoplasmic side of the membrane. In terms of domain architecture, J spans 204-270 (DACNVLGVKT…ELIKEQKGFK (67 aa)).

As to quaternary structure, homodimer.

It is found in the cell inner membrane. Regulatory DnaK co-chaperone. Direct interaction between DnaK and DjlA is needed for the induction of the wcaABCDE operon, involved in the synthesis of a colanic acid polysaccharide capsule, possibly through activation of the RcsB/RcsC phosphotransfer signaling pathway. The colanic acid capsule may help the bacterium survive conditions outside the host. This chain is Co-chaperone protein DjlA, found in Salmonella paratyphi A (strain ATCC 9150 / SARB42).